The sequence spans 419 residues: Serine hydroxymethyltransferase (419 aa).

Residues leucine 121 and glycine 125–leucine 127 contribute to the (6S)-5,6,7,8-tetrahydrofolate site. An N6-(pyridoxal phosphate)lysine modification is found at lysine 230. (6S)-5,6,7,8-tetrahydrofolate is bound at residue serine 355–phenylalanine 357.

Belongs to the SHMT family. In terms of assembly, homodimer. It depends on pyridoxal 5'-phosphate as a cofactor.

The protein resides in the cytoplasm. The catalysed reaction is (6R)-5,10-methylene-5,6,7,8-tetrahydrofolate + glycine + H2O = (6S)-5,6,7,8-tetrahydrofolate + L-serine. It functions in the pathway one-carbon metabolism; tetrahydrofolate interconversion. It participates in amino-acid biosynthesis; glycine biosynthesis; glycine from L-serine: step 1/1. Functionally, catalyzes the reversible interconversion of serine and glycine with tetrahydrofolate (THF) serving as the one-carbon carrier. This reaction serves as the major source of one-carbon groups required for the biosynthesis of purines, thymidylate, methionine, and other important biomolecules. Also exhibits THF-independent aldolase activity toward beta-hydroxyamino acids, producing glycine and aldehydes, via a retro-aldol mechanism. The chain is Serine hydroxymethyltransferase from Alkalilimnicola ehrlichii (strain ATCC BAA-1101 / DSM 17681 / MLHE-1).